Reading from the N-terminus, the 521-residue chain is Probable protein phosphatase 2C 16 (521 aa).

A PPM-type phosphatase domain is found at 21–327 (KYVVSSMQGW…ENTTVILVQF (307 aa)). Aspartate 57, glycine 58, glutamine 276, and glutamate 318 together coordinate Mn(2+). Positions 354–431 (AAPAGASDTS…ADADDGAPKP (78 aa)) are disordered.

It belongs to the PP2C family. It depends on Mg(2+) as a cofactor. Mn(2+) is required as a cofactor.

It catalyses the reaction O-phospho-L-seryl-[protein] + H2O = L-seryl-[protein] + phosphate. The catalysed reaction is O-phospho-L-threonyl-[protein] + H2O = L-threonyl-[protein] + phosphate. This chain is Probable protein phosphatase 2C 16, found in Oryza sativa subsp. japonica (Rice).